The chain runs to 234 residues: Ubiquinone biosynthesis O-methyltransferase (234 aa).

S-adenosyl-L-methionine contacts are provided by R40, G59, D80, and M123.

It belongs to the methyltransferase superfamily. UbiG/COQ3 family.

It catalyses the reaction a 3-demethylubiquinol + S-adenosyl-L-methionine = a ubiquinol + S-adenosyl-L-homocysteine + H(+). The enzyme catalyses a 3-(all-trans-polyprenyl)benzene-1,2-diol + S-adenosyl-L-methionine = a 2-methoxy-6-(all-trans-polyprenyl)phenol + S-adenosyl-L-homocysteine + H(+). It functions in the pathway cofactor biosynthesis; ubiquinone biosynthesis. In terms of biological role, O-methyltransferase that catalyzes the 2 O-methylation steps in the ubiquinone biosynthetic pathway. This is Ubiquinone biosynthesis O-methyltransferase from Coxiella burnetii (strain CbuG_Q212) (Coxiella burnetii (strain Q212)).